A 539-amino-acid chain; its full sequence is Serine/threonine-protein kinase 35 (539 aa).

Residues 103 to 161 (ITIQGPAPPHLGARRRDEARGARAAPLLLPPPPAAMETGKENGARRGTKSPERKRRSPV) form a disordered region. Positions 148-160 (RGTKSPERKRRSP) are enriched in basic residues. The region spanning 207–535 (YSLLAEIGRG…FELETRMDQV (329 aa)) is the Protein kinase domain. ATP contacts are provided by residues 213–221 (IGRGSYGVV) and K236. The Proton acceptor role is filled by D365.

It belongs to the protein kinase superfamily. Ser/Thr protein kinase family. As to quaternary structure, interacts with PDLIM1/CLP-36. Autophosphorylated.

The protein localises to the nucleus. It localises to the nucleolus. It is found in the cytoplasm. The enzyme catalyses L-seryl-[protein] + ATP = O-phospho-L-seryl-[protein] + ADP + H(+). It catalyses the reaction L-threonyl-[protein] + ATP = O-phospho-L-threonyl-[protein] + ADP + H(+). This Mus musculus (Mouse) protein is Serine/threonine-protein kinase 35 (Stk35).